We begin with the raw amino-acid sequence, 391 residues long: Immunoglobulin heavy constant alpha 2 (391 aa).

Residues 1 to 357 lie on the Extracellular side of the membrane; it reads ASPTSPKVFP…TPGANLWPTT (357 aa). Ig-like domains are found at residues 6–98, 112–207, and 215–317; these read PKVF…QDVT, PRLS…ANIT, and PEVH…KTID. A disulfide bridge links cysteine 26 with cysteine 85. The N-linked (GlcNAc...) asparagine glycan is linked to asparagine 47. An N-linked (GlcNAc...) (complex) asparagine glycan is attached at asparagine 92. Intrachain disulfides connect cysteine 110–cysteine 167 and cysteine 134–cysteine 191. An N-linked (GlcNAc...) asparagine glycan is attached at asparagine 131. An N-linked (GlcNAc...) (complex) asparagine glycan is attached at asparagine 205. Residues cysteine 237 and cysteine 300 are joined by a disulfide bond. The N-linked (GlcNAc...) (complex) asparagine glycan is linked to aspartate 327. A helical membrane pass occupies residues 358 to 379; that stretch reads ITFLTLFLLSLFYSTALTVTSV. The Cytoplasmic segment spans residues 380-391; that stretch reads RGPSGKREGPQY.

As to quaternary structure, immunoglobulins are composed of two identical heavy chains and two identical light chains; disulfide-linked. Monomeric or polymeric. Part of the secretory IgA (sIgA) complex that consists of two, four or five IgA monomers, and two additional non-Ig polypeptides, namely the JCHAIN and the secretory component (the proteolytic product of PIGR).

It localises to the secreted. The protein localises to the cell membrane. Its function is as follows. Constant region of immunoglobulin heavy chains. Immunoglobulins, also known as antibodies, are membrane-bound or secreted glycoproteins produced by B lymphocytes. In the recognition phase of humoral immunity, the membrane-bound immunoglobulins serve as receptors which, upon binding of a specific antigen, trigger the clonal expansion and differentiation of B lymphocytes into immunoglobulins-secreting plasma cells. Secreted immunoglobulins mediate the effector phase of humoral immunity, which results in the elimination of bound antigens. The antigen binding site is formed by the variable domain of one heavy chain, together with that of its associated light chain. Thus, each immunoglobulin has two antigen binding sites with remarkable affinity for a particular antigen. The variable domains are assembled by a process called V-(D)-J rearrangement and can then be subjected to somatic hypermutations which, after exposure to antigen and selection, allow affinity maturation for a particular antigen. Ig alpha is the major immunoglobulin class in body secretions. In Homo sapiens (Human), this protein is Immunoglobulin heavy constant alpha 2.